Reading from the N-terminus, the 402-residue chain is MNVATDPILTSILDTDAYKFHMQQAVFHRYHDVMVSAKFRCRGYELLGEYAADISAQVDMMRGLQLNDDEFTYLRGLPFFQSDYLNCLRQFRFDPSQVRIRNHHGKLDIRITGPWRDVILWEVPLLAVISEVVHHRRSPQVTTADAVARLRQKLLHFRRISEDLDTSRFRLMDFGTRRRFSRQVQFEVIAELQREFPYLIGTSNYQLARERGLPPIGTQAHEWFQAHQQISPDLANSQSAALQAWLDEYPDRLGIALTDCITMDAFLRDFGPSFARAYQGMRHDSGDPVEWGEKAIAHYQQLGIDPLTKTLVFSDSLDFDKAFMLYRHFWQRINLVFGIGTRLTCDIPGIKPLNIVIKLVKCNGKPVAKLSDSPGKIMCHDKAFVRALRKAFDVPLVVKKAS.

Histidine 221 carries the post-translational modification Phosphohistidine; by autocatalysis.

It belongs to the NAPRTase family. In terms of processing, transiently phosphorylated on a His residue during the reaction cycle. Phosphorylation strongly increases the affinity for substrates and increases the rate of nicotinate D-ribonucleotide production. Dephosphorylation regenerates the low-affinity form of the enzyme, leading to product release.

It carries out the reaction nicotinate + 5-phospho-alpha-D-ribose 1-diphosphate + ATP + H2O = nicotinate beta-D-ribonucleotide + ADP + phosphate + diphosphate. It functions in the pathway cofactor biosynthesis; NAD(+) biosynthesis; nicotinate D-ribonucleotide from nicotinate: step 1/1. Functionally, catalyzes the synthesis of beta-nicotinate D-ribonucleotide from nicotinate and 5-phospho-D-ribose 1-phosphate at the expense of ATP. In Sodalis glossinidius (strain morsitans), this protein is Nicotinate phosphoribosyltransferase.